The sequence spans 400 residues: Acetate kinase (400 aa).

N8 contacts Mg(2+). K15 serves as a coordination point for ATP. Residue R89 participates in substrate binding. D146 serves as the catalytic Proton donor/acceptor. ATP-binding positions include 206–210 (HVGNG), 283–285 (DMR), and 331–335 (GMGEN). E383 serves as a coordination point for Mg(2+).

It belongs to the acetokinase family. In terms of assembly, homodimer. The cofactor is Mg(2+). It depends on Mn(2+) as a cofactor.

Its subcellular location is the cytoplasm. It carries out the reaction acetate + ATP = acetyl phosphate + ADP. It functions in the pathway metabolic intermediate biosynthesis; acetyl-CoA biosynthesis; acetyl-CoA from acetate: step 1/2. Catalyzes the formation of acetyl phosphate from acetate and ATP. Can also catalyze the reverse reaction. The polypeptide is Acetate kinase (Streptococcus equi subsp. zooepidemicus (strain MGCS10565)).